Here is a 224-residue protein sequence, read N- to C-terminus: MSILLPNMAEFDTISELEEEEEEEAATSSSSPSSSSSVSGPDDDEEDEEEEEEEEEEEEEEEEEEEEEAPPPPRVVSEEHLRRYAPDPVLVRGAGHITVFGLSNKFDTEFPSVLTGKVAPEEFKTSIGRVNACLKKALPVNVKWLLCGCLCCCCTLGCSLWPVICLNKRTRRSIQKLIEWENNRLYHKLALHWKLTKRKCETSNMMEYVILIEFLPKYPIFRPD.

Residues 1-80 (MSILLPNMAE…PPPRVVSEEH (80 aa)) are disordered. Acidic residues predominate over residues 13-25 (TISELEEEEEEEA). Positions 26–40 (ATSSSSPSSSSSVSG) are enriched in low complexity. Acidic residues predominate over residues 41 to 69 (PDDDEEDEEEEEEEEEEEEEEEEEEEEEA). The stretch at 42-70 (DDDEEDEEEEEEEEEEEEEEEEEEEEEAP) forms a coiled coil.

Belongs to the CHIC family. In terms of processing, palmitoylated. In terms of tissue distribution, equally expressed in various parts of the brain.

The protein resides in the cell membrane. Its subcellular location is the cytoplasmic vesicle. In Homo sapiens (Human), this protein is Cysteine-rich hydrophobic domain-containing protein 1 (CHIC1).